We begin with the raw amino-acid sequence, 271 residues long: Formamidopyrimidine-DNA glycosylase (271 aa).

The Schiff-base intermediate with DNA role is filled by P2. The active-site Proton donor is E3. K58 functions as the Proton donor; for beta-elimination activity in the catalytic mechanism. DNA contacts are provided by H91, R110, and R152. Residues 237-271 form an FPG-type zinc finger; it reads SIYGKKGRPCPKCGSAIRMMRLGGRSTFFCPLCQK. The Proton donor; for delta-elimination activity role is filled by R261.

Belongs to the FPG family. In terms of assembly, monomer. Requires Zn(2+) as cofactor.

The catalysed reaction is Hydrolysis of DNA containing ring-opened 7-methylguanine residues, releasing 2,6-diamino-4-hydroxy-5-(N-methyl)formamidopyrimidine.. It catalyses the reaction 2'-deoxyribonucleotide-(2'-deoxyribose 5'-phosphate)-2'-deoxyribonucleotide-DNA = a 3'-end 2'-deoxyribonucleotide-(2,3-dehydro-2,3-deoxyribose 5'-phosphate)-DNA + a 5'-end 5'-phospho-2'-deoxyribonucleoside-DNA + H(+). Involved in base excision repair of DNA damaged by oxidation or by mutagenic agents. Acts as a DNA glycosylase that recognizes and removes damaged bases. Has a preference for oxidized purines, such as 7,8-dihydro-8-oxoguanine (8-oxoG). Has AP (apurinic/apyrimidinic) lyase activity and introduces nicks in the DNA strand. Cleaves the DNA backbone by beta-delta elimination to generate a single-strand break at the site of the removed base with both 3'- and 5'-phosphates. This is Formamidopyrimidine-DNA glycosylase from Geotalea daltonii (strain DSM 22248 / JCM 15807 / FRC-32) (Geobacter daltonii).